We begin with the raw amino-acid sequence, 147 residues long: Hemoglobin subunit delta (147 aa).

Positions 3–147 constitute a Globin domain; it reads NLTAAEKTQV…VANALAHKYH (145 aa). Residues His-64 and His-93 each coordinate heme b.

It belongs to the globin family. Heterotetramer of two delta chains and two alpha chains. As to expression, red blood cells.

This Elephas maximus (Indian elephant) protein is Hemoglobin subunit delta (HBD).